Reading from the N-terminus, the 531-residue chain is Protein SIS2 (531 aa).

Residues 1-20 (MPSDKDIKSPAQPKKEEEIP) show a composition bias toward basic and acidic residues. 5 disordered regions span residues 1–42 (MPSD…ANII), 88–127 (SPDSLNHKPTLLQPDKSESIPSIDYTLNPPKESQHHKSPS), 139–168 (RPVRNRSRSGSNSNNNLTPITSPQHSEPSS), 180–261 (SLRA…DPRL), and 461–531 (YPED…TTNL). The segment covering 155 to 168 (LTPITSPQHSEPSS) has biased composition (polar residues). Residues 183 to 198 (ATTNSISSAAASNQST) show a composition bias toward low complexity. A compositionally biased stretch (gly residues) spans 204-213 (SGGGGGGGGA). Residues 214 to 249 (NTATSSNSTTSNTALAAQGTTTTTTTTNSNSNTTTT) show a composition bias toward low complexity. Acidic residues-rich tracts occupy residues 462–472 (PEDEDEDEADD) and 481–514 (AIIDDDDDDDDDDDDDDDDDDDDDDDDDDDEEDP).

Belongs to the HFCD (homooligomeric flavin containing Cys decarboxylase) superfamily.

Its subcellular location is the nucleus. The protein localises to the cytoplasm. Functionally, may stimulate expression of certain genes that are periodically expressed during late G1. Also modulates the expression of the ENA1 ATPase. The chain is Protein SIS2 (SIS2) from Candida tropicalis (Yeast).